A 425-amino-acid polypeptide reads, in one-letter code: Histidine--tRNA ligase (425 aa).

Belongs to the class-II aminoacyl-tRNA synthetase family. In terms of assembly, homodimer.

It is found in the cytoplasm. It carries out the reaction tRNA(His) + L-histidine + ATP = L-histidyl-tRNA(His) + AMP + diphosphate + H(+). In Listeria monocytogenes serotype 4b (strain F2365), this protein is Histidine--tRNA ligase.